A 154-amino-acid chain; its full sequence is Endoribonuclease YbeY (154 aa).

3 residues coordinate Zn(2+): histidine 116, histidine 120, and histidine 126.

This sequence belongs to the endoribonuclease YbeY family. The cofactor is Zn(2+).

The protein localises to the cytoplasm. Its function is as follows. Single strand-specific metallo-endoribonuclease involved in late-stage 70S ribosome quality control and in maturation of the 3' terminus of the 16S rRNA. The protein is Endoribonuclease YbeY of Chromohalobacter salexigens (strain ATCC BAA-138 / DSM 3043 / CIP 106854 / NCIMB 13768 / 1H11).